The chain runs to 99 residues: High mobility group nucleosome-binding domain-containing protein 3 (99 aa).

Basic and acidic residues-rich tracts occupy residues 1–25 (MPKR…EPTR), 39–53 (PEPK…KEPG), and 62–72 (GKKEEKQEAGK). A disordered region spans residues 1–99 (MPKRKSPENT…KTESVDNEGE (99 aa)). Residue Ser-6 is modified to Phosphoserine. The residue at position 10 (Thr-10) is a Phosphothreonine. 2 positions are modified to phosphoserine: Ser-78 and Ser-93. Basic and acidic residues predominate over residues 81–93 (GETKAEEAQKTES).

This sequence belongs to the HMGN family. As to quaternary structure, interacts with the ligand binding domain of the thyroid receptor (TR) (in vitro). Requires the presence of thyroid hormone for its interaction. Interacts with transcriptional regulator SEHBP. Interacts with nucleosomes.

Its subcellular location is the nucleus. Binds to nucleosomes, regulating chromatin structure and consequently, chromatin-dependent processes such as transcription, DNA replication and DNA repair. Affects both insulin and glucagon levels and modulates the expression of pancreatic genes involved in insulin secretion. Regulates the expression of the glucose transporter SLC2A2 by binding specifically to its promoter region and recruiting PDX1 and additional transcription factors. Regulates the expression of SLC6A9, a glycine transporter which regulates the glycine concentration in synaptic junctions in the central nervous system, by binding to its transcription start site. May play a role in ocular development and astrocyte function. The sequence is that of High mobility group nucleosome-binding domain-containing protein 3 (HMGN3) from Pongo abelii (Sumatran orangutan).